A 354-amino-acid polypeptide reads, in one-letter code: NADH-quinone oxidoreductase subunit H (354 aa).

Helical transmembrane passes span 25 to 45, 91 to 111, 126 to 146, 170 to 190, 205 to 225, 267 to 287, 290 to 310, and 330 to 350; these read LVRI…LILW, WIYL…WAVI, LLYA…AGWA, MGFA…SGIV, FLSW…ISGI, IVIS…PFGF, FVPG…VFIW, and IFIP…MSPL.

This sequence belongs to the complex I subunit 1 family. As to quaternary structure, NDH-1 is composed of 14 different subunits. Subunits NuoA, H, J, K, L, M, N constitute the membrane sector of the complex.

It is found in the cell inner membrane. The catalysed reaction is a quinone + NADH + 5 H(+)(in) = a quinol + NAD(+) + 4 H(+)(out). In terms of biological role, NDH-1 shuttles electrons from NADH, via FMN and iron-sulfur (Fe-S) centers, to quinones in the respiratory chain. The immediate electron acceptor for the enzyme in this species is believed to be ubiquinone. Couples the redox reaction to proton translocation (for every two electrons transferred, four hydrogen ions are translocated across the cytoplasmic membrane), and thus conserves the redox energy in a proton gradient. This subunit may bind ubiquinone. This is NADH-quinone oxidoreductase subunit H from Paraburkholderia phytofirmans (strain DSM 17436 / LMG 22146 / PsJN) (Burkholderia phytofirmans).